The sequence spans 77 residues: Small ribosomal subunit protein bS21 (77 aa).

Over residues 38 to 52 (KPSEKRAREKAEAIR) the composition is skewed to basic and acidic residues. The segment at 38 to 77 (KPSEKRAREKAEAIRRTRKLARKRAQREGIVSNGRTASVR) is disordered. Basic residues predominate over residues 53-62 (RTRKLARKRA).

This sequence belongs to the bacterial ribosomal protein bS21 family.

The polypeptide is Small ribosomal subunit protein bS21 (Bartonella bacilliformis (strain ATCC 35685 / KC583 / Herrer 020/F12,63)).